A 267-amino-acid chain; its full sequence is Hydroxyethylthiazole kinase 2 (267 aa).

Met41 serves as a coordination point for substrate. ATP-binding residues include Lys116 and Thr166. Residue Gly193 participates in substrate binding.

Belongs to the Thz kinase family. Mg(2+) is required as a cofactor.

The catalysed reaction is 5-(2-hydroxyethyl)-4-methylthiazole + ATP = 4-methyl-5-(2-phosphooxyethyl)-thiazole + ADP + H(+). It functions in the pathway cofactor biosynthesis; thiamine diphosphate biosynthesis; 4-methyl-5-(2-phosphoethyl)-thiazole from 5-(2-hydroxyethyl)-4-methylthiazole: step 1/1. Catalyzes the phosphorylation of the hydroxyl group of 4-methyl-5-beta-hydroxyethylthiazole (THZ). The protein is Hydroxyethylthiazole kinase 2 of Streptococcus pneumoniae (strain 70585).